The primary structure comprises 370 residues: Uroporphyrinogen decarboxylase (370 aa).

Substrate contacts are provided by residues 29-33 (RQAGR), aspartate 79, tyrosine 155, serine 210, and histidine 342.

It belongs to the uroporphyrinogen decarboxylase family. Homodimer.

The protein resides in the cytoplasm. It carries out the reaction uroporphyrinogen III + 4 H(+) = coproporphyrinogen III + 4 CO2. The protein operates within porphyrin-containing compound metabolism; protoporphyrin-IX biosynthesis; coproporphyrinogen-III from 5-aminolevulinate: step 4/4. Its function is as follows. Catalyzes the decarboxylation of four acetate groups of uroporphyrinogen-III to yield coproporphyrinogen-III. This chain is Uroporphyrinogen decarboxylase, found in Acidovorax ebreus (strain TPSY) (Diaphorobacter sp. (strain TPSY)).